Here is a 541-residue protein sequence, read N- to C-terminus: Mesoderm induction early response protein 2 (541 aa).

Residue Ser-11 is modified to Phosphoserine. Disordered stretches follow at residues 100 to 119 (DPISEQESEGGDTAPALPDM) and 131 to 186 (LSGE…EEDA). Over residues 140-165 (QSSADDLTPSVTSHEASDLFHNQSGS) the composition is skewed to polar residues. Residues 194-291 (KEIMVGPQFQ…EALRRLRFNV (98 aa)) enclose the ELM2 domain. Residues 296–348 (DGLCAWSEEECRNFEHGFRVHGKNFHLIQANKVRTRSVGECVEYYYLWKKSER) enclose the SANT domain. Residues 364–440 (VSSGTTDTEQ…EPPAVPSLQQ (77 aa)) are disordered.

Part of a complex containing at least CDYL, MIER1, MIER2, HDAC1 and HDAC2.

The protein resides in the nucleus. Functionally, transcriptional repressor. The chain is Mesoderm induction early response protein 2 (Mier2) from Mus musculus (Mouse).